A 231-amino-acid polypeptide reads, in one-letter code: Lecithin retinol acyltransferase (231 aa).

At 1–194 the chain is on the cytoplasmic side; that stretch reads MKNPMLEAAS…VKIIIRDQRS (194 aa). Residues 50–177 enclose the LRAT domain; sequence VLEVSRTHFI…CRYGSRISPQ (128 aa). Active-site residues include histidine 60 and histidine 72. Cysteine 161 acts as the Acyl-thioester intermediate in catalysis. A helical transmembrane segment spans residues 195–215; sequence SLASAVLGLASIVYTGLASYM. Over 216–231 the chain is Lumenal; that stretch reads TLPAICIPFCLWMMSG.

The protein belongs to the H-rev107 family. As to expression, hepatic stellate cells and endothelial cells (at protein level).

The protein resides in the endoplasmic reticulum membrane. The protein localises to the rough endoplasmic reticulum. It is found in the endosome. Its subcellular location is the multivesicular body. It localises to the cytoplasm. The protein resides in the perinuclear region. The enzyme catalyses all-trans-retinol--[retinol-binding protein] + a 1,2-diacyl-sn-glycero-3-phosphocholine = apo--[retinol-binding protein] + an all-trans-retinyl ester + a 2-acyl-sn-glycero-3-phosphocholine. It carries out the reaction 1,2-diheptanoyl-sn-glycero-3-phosphocholine + all-trans-retinol--[retinol-binding protein] = all-trans-retinyl heptanoate + 2-heptanoyl-sn-glycero-3-phosphocholine + apo--[retinol-binding protein]. The catalysed reaction is 1,2-dioctanoyl-sn-glycero-3-phosphocholine + all-trans-retinol--[retinol-binding protein] = 2-octanoyl-sn-glycero-3-phosphocholine + all-trans-retinyl octanoate + apo--[retinol-binding protein]. It catalyses the reaction all-trans-retinol--[retinol-binding protein] + 1,2-dihexadecanoyl-sn-glycero-3-phosphocholine = apo--[retinol-binding protein] + all-trans-retinyl hexadecanoate + 2-hexadecanoyl-sn-glycero-3-phosphocholine. The enzyme catalyses 1,2-didodecanoyl-sn-glycero-3-phosphocholine + all-trans-retinol--[retinol-binding protein] = 2-dodecanoyl-sn-glycero-3-phosphocholine + all-trans-retinyl dodecanoate + apo--[retinol-binding protein]. It carries out the reaction 1,2-dihexadecanoyl-sn-glycero-3-phosphocholine + all-trans-retinol = all-trans-retinyl hexadecanoate + 2-hexadecanoyl-sn-glycero-3-phosphocholine. It participates in cofactor metabolism; retinol metabolism. Its activity is regulated as follows. Inhibited by all-trans-retinyl alpha-bromoacetate and N-boc-L-biocytinyl-11-aminoundecane chloro-methyl ketone (BACMK). In terms of biological role, transfers the acyl group from the sn-1 position of phosphatidylcholine to all-trans retinol, producing all-trans retinyl esters. Retinyl esters are storage forms of vitamin A. LRAT plays a critical role in vision. It provides the all-trans retinyl ester substrates for the isomerohydrolase which processes the esters into 11-cis-retinol in the retinal pigment epithelium; due to a membrane-associated alcohol dehydrogenase, 11 cis-retinol is oxidized and converted into 11-cis-retinaldehyde which is the chromophore for rhodopsin and the cone photopigments. Required for the survival of cone photoreceptors and correct rod photoreceptor cell morphology. The protein is Lecithin retinol acyltransferase (Lrat) of Mus musculus (Mouse).